The following is a 406-amino-acid chain: Cysteine desulfurase (406 aa).

Lys226 is modified (N6-(pyridoxal phosphate)lysine). Cys364 serves as the catalytic Cysteine persulfide intermediate.

It belongs to the class-V pyridoxal-phosphate-dependent aminotransferase family. Csd subfamily. Homodimer. Interacts with SufE and the SufBCD complex composed of SufB, SufC and SufD. The interaction with SufE is required to mediate the direct transfer of the sulfur atom from the S-sulfanylcysteine. Pyridoxal 5'-phosphate is required as a cofactor.

It localises to the cytoplasm. It catalyses the reaction (sulfur carrier)-H + L-cysteine = (sulfur carrier)-SH + L-alanine. The catalysed reaction is L-selenocysteine + AH2 = hydrogenselenide + L-alanine + A + H(+). Its pathway is cofactor biosynthesis; iron-sulfur cluster biosynthesis. Its function is as follows. Cysteine desulfurases mobilize the sulfur from L-cysteine to yield L-alanine, an essential step in sulfur metabolism for biosynthesis of a variety of sulfur-containing biomolecules. Component of the suf operon, which is activated and required under specific conditions such as oxidative stress and iron limitation. Acts as a potent selenocysteine lyase in vitro, that mobilizes selenium from L-selenocysteine. Selenocysteine lyase activity is however unsure in vivo. This Escherichia coli (strain K12 / MC4100 / BW2952) protein is Cysteine desulfurase.